We begin with the raw amino-acid sequence, 217 residues long: Thiamine-phosphate synthase (217 aa).

4-amino-2-methyl-5-(diphosphooxymethyl)pyrimidine-binding positions include 44 to 48 (QYREK) and N76. Residues D77 and D96 each coordinate Mg(2+). S115 serves as a coordination point for 4-amino-2-methyl-5-(diphosphooxymethyl)pyrimidine. A 2-[(2R,5Z)-2-carboxy-4-methylthiazol-5(2H)-ylidene]ethyl phosphate-binding site is contributed by 141 to 143 (TKT). K144 contributes to the 4-amino-2-methyl-5-(diphosphooxymethyl)pyrimidine binding site. 2-[(2R,5Z)-2-carboxy-4-methylthiazol-5(2H)-ylidene]ethyl phosphate is bound by residues G172 and 192–193 (VS).

This sequence belongs to the thiamine-phosphate synthase family. Mg(2+) is required as a cofactor.

It catalyses the reaction 2-[(2R,5Z)-2-carboxy-4-methylthiazol-5(2H)-ylidene]ethyl phosphate + 4-amino-2-methyl-5-(diphosphooxymethyl)pyrimidine + 2 H(+) = thiamine phosphate + CO2 + diphosphate. The enzyme catalyses 2-(2-carboxy-4-methylthiazol-5-yl)ethyl phosphate + 4-amino-2-methyl-5-(diphosphooxymethyl)pyrimidine + 2 H(+) = thiamine phosphate + CO2 + diphosphate. The catalysed reaction is 4-methyl-5-(2-phosphooxyethyl)-thiazole + 4-amino-2-methyl-5-(diphosphooxymethyl)pyrimidine + H(+) = thiamine phosphate + diphosphate. It functions in the pathway cofactor biosynthesis; thiamine diphosphate biosynthesis; thiamine phosphate from 4-amino-2-methyl-5-diphosphomethylpyrimidine and 4-methyl-5-(2-phosphoethyl)-thiazole: step 1/1. Condenses 4-methyl-5-(beta-hydroxyethyl)thiazole monophosphate (THZ-P) and 2-methyl-4-amino-5-hydroxymethyl pyrimidine pyrophosphate (HMP-PP) to form thiamine monophosphate (TMP). This Lawsonia intracellularis (strain PHE/MN1-00) protein is Thiamine-phosphate synthase.